Consider the following 390-residue polypeptide: Succinate--CoA ligase [ADP-forming] subunit beta (390 aa).

One can recognise an ATP-grasp domain in the interval Lys9–Glu244. ATP is bound by residues Lys46, Gly53–Gly55, Glu99, Ala102, and Glu107. 2 residues coordinate Mg(2+): Asn199 and Asp213. Substrate contacts are provided by residues Asn264 and Gly321–Val323.

The protein belongs to the succinate/malate CoA ligase beta subunit family. As to quaternary structure, heterotetramer of two alpha and two beta subunits. Mg(2+) is required as a cofactor.

It catalyses the reaction succinate + ATP + CoA = succinyl-CoA + ADP + phosphate. The enzyme catalyses GTP + succinate + CoA = succinyl-CoA + GDP + phosphate. It functions in the pathway carbohydrate metabolism; tricarboxylic acid cycle; succinate from succinyl-CoA (ligase route): step 1/1. In terms of biological role, succinyl-CoA synthetase functions in the citric acid cycle (TCA), coupling the hydrolysis of succinyl-CoA to the synthesis of either ATP or GTP and thus represents the only step of substrate-level phosphorylation in the TCA. The beta subunit provides nucleotide specificity of the enzyme and binds the substrate succinate, while the binding sites for coenzyme A and phosphate are found in the alpha subunit. In Nautilia profundicola (strain ATCC BAA-1463 / DSM 18972 / AmH), this protein is Succinate--CoA ligase [ADP-forming] subunit beta.